The chain runs to 572 residues: Proline--tRNA ligase (572 aa).

This sequence belongs to the class-II aminoacyl-tRNA synthetase family. ProS type 1 subfamily. As to quaternary structure, homodimer.

It is found in the cytoplasm. The enzyme catalyses tRNA(Pro) + L-proline + ATP = L-prolyl-tRNA(Pro) + AMP + diphosphate. Functionally, catalyzes the attachment of proline to tRNA(Pro) in a two-step reaction: proline is first activated by ATP to form Pro-AMP and then transferred to the acceptor end of tRNA(Pro). As ProRS can inadvertently accommodate and process non-cognate amino acids such as alanine and cysteine, to avoid such errors it has two additional distinct editing activities against alanine. One activity is designated as 'pretransfer' editing and involves the tRNA(Pro)-independent hydrolysis of activated Ala-AMP. The other activity is designated 'posttransfer' editing and involves deacylation of mischarged Ala-tRNA(Pro). The misacylated Cys-tRNA(Pro) is not edited by ProRS. The polypeptide is Proline--tRNA ligase (Escherichia coli O157:H7).